The following is a 139-amino-acid chain: Ribulose bisphosphate carboxylase small subunit (139 aa).

The protein belongs to the RuBisCO small chain family. As to quaternary structure, heterohexadecamer of 8 large and 8 small subunits.

It localises to the plastid. The protein localises to the chloroplast. In terms of biological role, ruBisCO catalyzes two reactions: the carboxylation of D-ribulose 1,5-bisphosphate, the primary event in carbon dioxide fixation, as well as the oxidative fragmentation of the pentose substrate in the photorespiration process. Both reactions occur simultaneously and in competition at the same active site. Although the small subunit is not catalytic it is essential for maximal activity. This Cylindrotheca sp. (strain N1) (Marine diatom) protein is Ribulose bisphosphate carboxylase small subunit.